A 431-amino-acid polypeptide reads, in one-letter code: Tol-Pal system protein TolB (431 aa).

Positions 1 to 26 (MRLMTKLGFRALVASCLIAAGAAANA) are cleaved as a signal peptide. The disordered stretch occupies residues 411–431 (PQILSVQGGSVREPSWGPFMQ).

This sequence belongs to the TolB family. In terms of assembly, the Tol-Pal system is composed of five core proteins: the inner membrane proteins TolA, TolQ and TolR, the periplasmic protein TolB and the outer membrane protein Pal. They form a network linking the inner and outer membranes and the peptidoglycan layer.

It is found in the periplasm. In terms of biological role, part of the Tol-Pal system, which plays a role in outer membrane invagination during cell division and is important for maintaining outer membrane integrity. The protein is Tol-Pal system protein TolB of Burkholderia ambifaria (strain ATCC BAA-244 / DSM 16087 / CCUG 44356 / LMG 19182 / AMMD) (Burkholderia cepacia (strain AMMD)).